Consider the following 417-residue polypeptide: Protein FAM181B (417 aa).

The tract at residues 104–147 (CSGLMGTAPPRPASPSAADAPAKRPPGAPTVATPAHCKAAPRRE) is disordered.

This sequence belongs to the FAM181 family.

The chain is Protein FAM181B (Fam181b) from Mus musculus (Mouse).